The following is a 394-amino-acid chain: Putative fimbrial assembly protein FimD, serogroup D (394 aa).

This Dichelobacter nodosus (Bacteroides nodosus) protein is Putative fimbrial assembly protein FimD, serogroup D (fimD).